The chain runs to 225 residues: Uracil-DNA glycosylase (225 aa).

The Proton acceptor role is filled by D65.

Belongs to the uracil-DNA glycosylase (UDG) superfamily. UNG family.

It is found in the cytoplasm. The catalysed reaction is Hydrolyzes single-stranded DNA or mismatched double-stranded DNA and polynucleotides, releasing free uracil.. Its function is as follows. Excises uracil residues from the DNA which can arise as a result of misincorporation of dUMP residues by DNA polymerase or due to deamination of cytosine. The polypeptide is Uracil-DNA glycosylase (Bacillus cereus (strain ATCC 10987 / NRS 248)).